The following is a 178-amino-acid chain: ATP synthase subunit delta (178 aa).

The protein belongs to the ATPase delta chain family. In terms of assembly, F-type ATPases have 2 components, F(1) - the catalytic core - and F(0) - the membrane proton channel. F(1) has five subunits: alpha(3), beta(3), gamma(1), delta(1), epsilon(1). F(0) has three main subunits: a(1), b(2) and c(10-14). The alpha and beta chains form an alternating ring which encloses part of the gamma chain. F(1) is attached to F(0) by a central stalk formed by the gamma and epsilon chains, while a peripheral stalk is formed by the delta and b chains.

Its subcellular location is the cell inner membrane. In terms of biological role, f(1)F(0) ATP synthase produces ATP from ADP in the presence of a proton or sodium gradient. F-type ATPases consist of two structural domains, F(1) containing the extramembraneous catalytic core and F(0) containing the membrane proton channel, linked together by a central stalk and a peripheral stalk. During catalysis, ATP synthesis in the catalytic domain of F(1) is coupled via a rotary mechanism of the central stalk subunits to proton translocation. This protein is part of the stalk that links CF(0) to CF(1). It either transmits conformational changes from CF(0) to CF(1) or is implicated in proton conduction. In Chromobacterium violaceum (strain ATCC 12472 / DSM 30191 / JCM 1249 / CCUG 213 / NBRC 12614 / NCIMB 9131 / NCTC 9757 / MK), this protein is ATP synthase subunit delta.